Reading from the N-terminus, the 420-residue chain is Calreticulin (420 aa).

The N-terminal stretch at 1–18 (MKWGVVAVLATLVVAASA) is a signal peptide. The cysteines at positions 106 and 140 are disulfide-linked. Residues tyrosine 110, lysine 112, tyrosine 131, and aspartate 138 each contribute to the an alpha-D-glucoside site. 7 consecutive repeat copies span residues 194 to 205 (VASGSLYEDWDM), 213 to 224 (DPKASKPEDWDE), 230 to 241 (DPEDKKPEGWDD), 248 to 259 (DKDAKKPEDWDD), 263 to 273 (GTWEPPMIPNP), 277 to 287 (GEWKAKMIKNP), and 291 to 301 (GIWVAPDIDNP). Positions 194-259 (VASGSLYEDW…DAKKPEDWDD (66 aa)) are 4 X approximate repeats. Basic and acidic residues predominate over residues 210–220 (TIKDPKASKPE). The interval 210–272 (TIKDPKASKP…GTWEPPMIPN (63 aa)) is disordered. The segment covering 221–230 (DWDEREEIAD) has biased composition (acidic residues). Residues 263–301 (GTWEPPMIPNPEYKGEWKAKMIKNPAYKGIWVAPDIDNP) are 3 X approximate repeats. Glutamate 321 contacts an alpha-D-glucoside. Positions 357-376 (EEKAMFDKVKKEEDEKKAKD) are enriched in basic and acidic residues. Positions 357 to 420 (EEKAMFDKVK…EEEESGHDEL (64 aa)) are disordered. Acidic residues-rich tracts occupy residues 385-398 (EAAE…EDKE) and 411-420 (EEEESGHDEL). The Prevents secretion from ER motif lies at 417 to 420 (HDEL).

It belongs to the calreticulin family.

The protein localises to the endoplasmic reticulum lumen. Molecular calcium-binding chaperone promoting folding, oligomeric assembly and quality control in the ER via the calreticulin/calnexin cycle. This lectin may interact transiently with almost all of the monoglucosylated glycoproteins that are synthesized in the ER. The chain is Calreticulin from Chlamydomonas reinhardtii (Chlamydomonas smithii).